The sequence spans 1525 residues: Multidrug resistance protein mrp-7 (1525 aa).

Residues 1–24 (MLSSFCGDGHPFSTGLPNVSICAQ) are Extracellular-facing. A glycan (N-linked (GlcNAc...) asparagine) is linked at Asn18. A helical membrane pass occupies residues 25 to 45 (HTVLVWVPAAFFLLTLPFLSA). Topologically, residues 46–66 (QCHLTAQRFARLPFSAHFIIK) are cytoplasmic. The chain crosses the membrane as a helical span at residues 67-87 (LLLVAFLAANSLATWCYVLFS). Over 88 to 94 (KNSYAAA) the chain is Extracellular. The chain crosses the membrane as a helical span at residues 95 to 115 (YYVYPGLWVLVWTGTFLVHLI). Topologically, residues 116 to 118 (RLR) are cytoplasmic. The helical transmembrane segment at 119–139 (CGLVSSGIQHVTSLIFLLCGA) threads the bilayer. Over 140–165 (PEFYQWIRMENSNSFPNDLTTTDSAQ) the chain is Extracellular. A helical transmembrane segment spans residues 166 to 186 (FLSIAYLSWYSALILYTFSLC). The Cytoplasmic segment spans residues 187-346 (FADPRGAKTD…APFWKGMALS (160 aa)). The ABC transmembrane type-1 1 domain maps to 305 to 587 (LLASTLKFVS…IALLINQAVQ (283 aa)). A helical transmembrane segment spans residues 347–367 (ILMFSVSELRSLILNGYFYIM). Over 368–434 (FRMGTKIQTS…SCPYQITFAL (67 aa)) the chain is Extracellular. A helical membrane pass occupies residues 435–455 (VYLFITLGYSALPGVVIMVIF). Topologically, residues 456–535 (VPMNIISSMI…NILDSFNTAS (80 aa)) are cytoplasmic. A helical transmembrane segment spans residues 536 to 556 (PFLVALFSFGTFVLSNPSHLL). Over 557–561 (TPQIA) the chain is Extracellular. The helical transmembrane segment at 562–582 (FVSLALFNQLRSPMTMIALLI) threads the bilayer. Residues 583-953 (NQAVQAVVSN…ATYQLYVKAA (371 aa)) lie on the Cytoplasmic side of the membrane. One can recognise an ABC transporter 1 domain in the interval 622-849 (VRVENLTASW…RGLFFDFMEE (228 aa)). 659-666 (GKVGSGKS) contributes to the ATP binding site. Residues 900–925 (ELTTQISTMSSPEKPPTGTSPAAATE) form a disordered region. The helical transmembrane segment at 954-974 (GYLLSIAFIGFFIVYMTLQIL) threads the bilayer. The region spanning 959 to 1245 (IAFIGFFIVY…AVRQVSEIEA (287 aa)) is the ABC transmembrane type-1 2 domain. Residues 975-1005 (RSFWLSAWSDEYDPDSPSAHPMAKGWRLGVY) lie on the Extracellular side of the membrane. The chain crosses the membrane as a helical span at residues 1006-1026 (GALGFSETACFFVALLALVFV). Residues 1027 to 1068 (GQRASKNLHGPLIHNLMRSPMSFYDTTPLGRILNRCAKDIET) lie on the Cytoplasmic side of the membrane. Residues 1069–1089 (IDMMLPMNFRYLVMCVLQVAF) traverse the membrane as a helical segment. Thr1090 is a topological domain (extracellular). A helical membrane pass occupies residues 1091–1111 (LIVIIISTPLFAVVILPLALI). Residues 1112–1184 (YLIFLRYYVP…RYSSLVSNRW (73 aa)) lie on the Cytoplasmic side of the membrane. Residues 1185–1205 (LAVRLEFVGNCIIFFAALFAV) traverse the membrane as a helical segment. Over 1206-1525 (LSKEFGWITS…ADAAEQDKHE (320 aa)) the chain is Extracellular. Asn1228 is a glycosylation site (N-linked (GlcNAc...) asparagine). Residues 1282-1516 (VKFDGYSTRY…KNSAFAKMVA (235 aa)) form the ABC transporter 2 domain. 1316-1323 (GRTGAGKS) is an ATP binding site. N-linked (GlcNAc...) asparagine glycans are attached at residues Asn1358 and Asn1418.

Belongs to the ABC transporter superfamily. ABCC family. Conjugate transporter (TC 3.A.1.208) subfamily. As to expression, expressed in head neurons, including the dopamine (DA) motor neuron, and other cells in the body.

It is found in the cell membrane. Negatively regulates cellular toxicity by mediating the export of environmental toxicants such as methylmercury out of the cell. Plays a role in inhibiting methylmercury-induced dopamine (DA) motor neuron degeneration. Not involved in Mn(2+)- or Al(3+)-associated toxicity. The polypeptide is Multidrug resistance protein mrp-7 (Caenorhabditis elegans).